The primary structure comprises 261 residues: Carbonic anhydrase 1 (261 aa).

Residues 1–31 (MASPDWGYDDKNGPEQWSKLYPIANGNNQSP) are disordered. An N-acetylalanine modification is found at alanine 2. The Alpha-carbonic anhydrase domain maps to 4 to 261 (PDWGYDDKNG…LKGRTVRASF (258 aa)). Catalysis depends on histidine 65, which acts as the Proton donor/acceptor. Zn(2+) is bound by residues histidine 95, histidine 97, and histidine 120. Substrate-binding positions include threonine 200 and 200 to 201 (TH). Positions 240–261 (VPMQHNNRPTQPLKGRTVRASF) are disordered.

It belongs to the alpha-carbonic anhydrase family. It depends on Zn(2+) as a cofactor.

It is found in the cytoplasm. The enzyme catalyses hydrogencarbonate + H(+) = CO2 + H2O. It catalyses the reaction urea = cyanamide + H2O. Its activity is regulated as follows. Inhibited by acetazolamide. Functionally, catalyzes the reversible hydration of carbon dioxide. Can hydrate cyanamide to urea. The chain is Carbonic anhydrase 1 (CA1) from Gorilla gorilla gorilla (Western lowland gorilla).